We begin with the raw amino-acid sequence, 384 residues long: Trophoblast glycoprotein-like (384 aa).

The signal sequence occupies residues 1–30 (MAPRAGQRGLWSPLPGLLLLAAALSRPAAP). Disulfide bonds link cysteine 31-cysteine 37 and cysteine 35-cysteine 47. At 31–309 (CPFQCYCFGS…DVAGPELEAS (279 aa)) the chain is on the extracellular side. LRR repeat units follow at residues 61–84 (PPDARNLTIVGANLTVLRAAAFAG), 95–118 (LPLLTALRLTHNNIEVVEDGAFDG), 119–142 (LPSLAALDLSHNPLRALGYRAFRG), 173–196 (LAELRLLGLVGNALSRLPLAALRL), and 198–219 (RLEQLDARVNALAGLGPDELSA). The N-linked (GlcNAc...) asparagine glycan is linked to asparagine 66. 2 cysteine pairs are disulfide-bonded: cysteine 240–cysteine 266 and cysteine 242–cysteine 287. Residues 310-330 (YVFFGLVLALIGLIFLMVLYL) traverse the membrane as a helical segment. The Cytoplasmic segment spans residues 331–384 (NRRGIQRWMHNLREACRDQMEGYHYRYEQDADPRRAPAPAAPAGSRATSPGSGL). The disordered stretch occupies residues 361 to 384 (ADPRRAPAPAAPAGSRATSPGSGL). Residues 367–384 (PAPAAPAGSRATSPGSGL) are compositionally biased toward low complexity.

It localises to the membrane. The chain is Trophoblast glycoprotein-like (Tpbgl) from Mus musculus (Mouse).